Here is a 386-residue protein sequence, read N- to C-terminus: Latent membrane protein 1 (386 aa).

Residues 1–23 (MEHDLERGPPGPRRPPRGPPLSS) lie on the Cytoplasmic side of the membrane. A helical membrane pass occupies residues 24–44 (SLGLALLLLLLALLFWLYIVM). Residues 45–51 (SDWTGGA) lie on the Extracellular side of the membrane. The chain crosses the membrane as a helical span at residues 52–72 (LLVLYSFALMLIIIILIIFIF). Over 73 to 75 (RRD) the chain is Cytoplasmic. A helical transmembrane segment spans residues 76–96 (LLCPLGALCILLLMITLLLIA). Residues 97-106 (LWNLHGQALF) are Extracellular-facing. A helical membrane pass occupies residues 107–127 (LGIVLFIFGCLLVLGIWIYLL). The Cytoplasmic portion of the chain corresponds to 128 to 139 (EMLWRLGATIWQ). The helical transmembrane segment at 140 to 160 (LLAFFLAFFLDLILLIIALYL) threads the bilayer. At 161-163 (QQN) the chain is on the extracellular side. A helical transmembrane segment spans residues 164 to 184 (WWTLLVDLLWLLLFLAILIWM). Topologically, residues 185 to 386 (YYHGQRHSDE…HGPVQLSYYD (202 aa)) are cytoplasmic. The interval 194–232 (EHHHDDSLPHPQQATDDSGHESDSNSNEGRHHLLVSGAG) is CTAR1. Residues 194 to 386 (EHHHDDSLPH…HGPVQLSYYD (193 aa)) form a disordered region. An Interaction with host TRAF proteins motif is present at residues 204-208 (PQQAT). Residues 210–224 (DSGHESDSNSNEGRH) show a composition bias toward basic and acidic residues. Low complexity predominate over residues 251-267 (NGPQDPDNTDDNGPQDP). Residues 351–386 (GHGGGDPHLPTLLLGSSGSGGDDDDPHGPVQLSYYD) are CTAR2.

This sequence belongs to the herpesviridae LMP-1 family. Interacts (via PXQXT motif) with host tumor necrosis factor receptor-associated factor (TRAF) proteins TRAF1, TRAF2, TRAF3 and TRAF5. Interacts with human protein ZMYND11; leading to negatively regulate NF-kappa-B activation. Interacts with host UBE2I; this interaction induces the sumoylation of various cellular proteins. Interacts with host IRF7. Interacts with host TYK2. Post-translationally, ubiquitinated on the N-terminus.

The protein localises to the host cell membrane. Its function is as follows. Acts as a CD40 functional homolog to prevent apoptosis of infected B-lymphocytes and drive their proliferation. Functions as a constitutively active tumor necrosis factor receptor that induces the activation of several signaling pathways, including those of the NF-kappa-B family. LMP1 signaling leads to up-regulation of antiapoptotic proteins and provide growth signals in latently infected cells. Interacts with host UBE2I and subsequently affects the sumoylation state of several cellular proteins. For example, induces the sumoylation of host IRF7 thereby limiting its transcriptional activity and modulating the activation of innate immune responses. Also inhibits host IFN-alpha-stimulated STAT2 nuclear translocation and interferon-stimulated response element transcriptional activity by interacting with and inhibiting host TYK2. Induces SUMO expression during viral latency thereby dysregulating the host sumoylation processes. The chain is Latent membrane protein 1 (LMP1) from Epstein-Barr virus (strain B95-8) (HHV-4).